A 362-amino-acid chain; its full sequence is DLA class I histocompatibility antigen, A9/A9 alpha chain (362 aa).

Residues 1 to 24 form the signal peptide; sequence MEVVMPRALLVLLSAALALTPTRA. An alpha-1 region spans residues 25–114; sequence GSHSLRYFYT…LRGYYNQSEA (90 aa). The Extracellular portion of the chain corresponds to 25 to 306; it reads GSHSLRYFYT…RRWEPSPLST (282 aa). Asparagine 110 is a glycosylation site (N-linked (GlcNAc...) asparagine). The alpha-2 stretch occupies residues 115–207; sequence GSHTRQTMYG…EMGKETLLRA (93 aa). Intrachain disulfides connect cysteine 125-cysteine 189 and cysteine 228-cysteine 284. Residues 208-299 are alpha-3; the sequence is DPPSTRVTHH…GLPEPITRRW (92 aa). Positions 210-296 constitute an Ig-like C1-type domain; that stretch reads PSTRVTHHPV…QHEGLPEPIT (87 aa). A connecting peptide region spans residues 300-306; that stretch reads EPSPLST. The helical transmembrane segment at 307–329 threads the bilayer; that stretch reads IVIVSIAALVLLVVAGVIGAVIW. The Cytoplasmic portion of the chain corresponds to 330 to 362; that stretch reads RKQRSGGKGPGYSHAARDDSAQGSDVSLTAPRV. The tract at residues 333–362 is disordered; the sequence is RSGGKGPGYSHAARDDSAQGSDVSLTAPRV.

Belongs to the MHC class I family. In terms of assembly, heterodimer of an alpha chain and a beta chain (beta-2-microglobulin).

It localises to the membrane. Functionally, involved in the presentation of foreign antigens to the immune system. The chain is DLA class I histocompatibility antigen, A9/A9 alpha chain from Canis lupus familiaris (Dog).